Reading from the N-terminus, the 435-residue chain is MARGTALLGLTSLLLGLVNGQKPGETKEVHPQLTTFRCTKKGGCKPATNYIVLDSLSHPIHRAEGLGWGNCGDWGNPPPKDVCPDVESCAKNCIMEGIPDYSQYGVTTNGTSLRLQHILPDGRVPSPRVYLLDKTERRYEMLHLTGFEFTFDVDATKLPCGMNSALYLSEMHPTGAKSKHNPGGAYYGTGYCDAQCFVTPFINGLGNIEGKGSCCNEMDIWEANSRASHVAPHVCNKKGLYLCEGEECAFEGVCDKNGCGWNPYRVNVTDYYGRGEEFKVNTLKPFTVVTQFLANRKGKLEKIHRFYVQDGKIIESFYTNKEGIPYTNMIEDEFCAATGSRKYMELGATQGMGEALTRGMVLAMSIWWDQGGNMEWLDHGEAGPCAKGEGAPSNVVQVEPFPEVTYTNLRWGEIGSTYQEVQKPKPKPGPGPRSD.

The N-terminal stretch at 1–20 (MARGTALLGLTSLLLGLVNG) is a signal peptide. Q21 carries the pyrrolidone carboxylic acid modification. Cystine bridges form between C38/C44, C71/C93, and C83/C89. A glycan (N-linked (GlcNAc...) asparagine) is linked at N109. Intrachain disulfides connect C160/C385, C192/C215, C196/C214, C235/C254, C243/C248, and C259/C335. E217 serves as the catalytic Nucleophile. The Proton donor role is filled by E222. N267 carries N-linked (GlcNAc...) asparagine glycosylation.

It belongs to the glycosyl hydrolase 7 (cellulase C) family.

It is found in the secreted. The enzyme catalyses Endohydrolysis of (1-&gt;4)-beta-D-glucosidic linkages in cellulose, lichenin and cereal beta-D-glucans.. The biological conversion of cellulose to glucose generally requires three types of hydrolytic enzymes: (1) Endoglucanases which cut internal beta-1,4-glucosidic bonds; (2) Exocellobiohydrolases that cut the disaccharide cellobiose from the non-reducing end of the cellulose polymer chain; (3) Beta-1,4-glucosidases which hydrolyze the cellobiose and other short cello-oligosaccharides to glucose. The sequence is that of Endoglucanase EG-1 (EG-1) from Humicola insolens (Soft-rot fungus).